We begin with the raw amino-acid sequence, 1179 residues long: DNA-directed RNA polymerase subunit beta (1179 aa).

Over residues 1153–1162 (MREMEDEDEG) the composition is skewed to acidic residues. A disordered region spans residues 1153 to 1179 (MREMEDEDEGNGEKLNLVLEGGSLNEE).

It belongs to the RNA polymerase beta chain family. As to quaternary structure, the RNAP catalytic core consists of 2 alpha, 1 beta, 1 beta' and 1 omega subunit. When a sigma factor is associated with the core the holoenzyme is formed, which can initiate transcription.

It catalyses the reaction RNA(n) + a ribonucleoside 5'-triphosphate = RNA(n+1) + diphosphate. In terms of biological role, DNA-dependent RNA polymerase catalyzes the transcription of DNA into RNA using the four ribonucleoside triphosphates as substrates. The polypeptide is DNA-directed RNA polymerase subunit beta (Brevibacillus brevis (strain 47 / JCM 6285 / NBRC 100599)).